The chain runs to 1432 residues: Superkiller protein 3 (1432 aa).

TPR repeat units follow at residues 4–37 (IKQL…DPDN) and 47–80 (ALSS…VPDN). Positions 339-397 (SANKPPEGHKKTEKETDIKDVDETNEDEVKDRVEDEVKDRVEDEVKDQDEEAKEDEEED) are disordered. Residues 344 to 381 (PEGHKKTEKETDIKDVDETNEDEVKDRVEDEVKDRVED) show a composition bias toward basic and acidic residues. A compositionally biased stretch (acidic residues) spans 382-397 (EVKDQDEEAKEDEEED). 9 TPR repeats span residues 425–458 (ILAH…IAYN), 471–507 (REFS…DFSN), 508–541 (IQAK…SPNN), 627–661 (APGF…DAGD), 702–735 (NWPF…DPND), 736–769 (VESW…RPSH), 945–985 (ASYW…QSNT), 987–1018 (ETWI…EPKA), and 1226–1259 (ISNH…SKDS).

The protein belongs to the SKI3 family. As to quaternary structure, component of the SKI complex composed of at least SKI2, SKI3 and SKI8. The SKI complex interacts with SKI7, which makes the link between the SKI complex and the exosome in order to perform mRNA degradation.

Its subcellular location is the cytoplasm. The protein resides in the nucleus. Its function is as follows. Component of the SKI complex involved in 3'-mRNA degradation pathway. Represses dsRNA virus propagation by specifically blocking translation of viral mRNAs, perhaps recognizing the absence of CAP or poly(A). Essential for cell growth only in the presence of M1 replicon. The protein is Superkiller protein 3 (SKI3) of Saccharomyces cerevisiae (strain ATCC 204508 / S288c) (Baker's yeast).